The primary structure comprises 101 residues: Small ribosomal subunit protein uS14 (101 aa).

The protein belongs to the universal ribosomal protein uS14 family. As to quaternary structure, part of the 30S ribosomal subunit. Contacts proteins S3 and S10.

Binds 16S rRNA, required for the assembly of 30S particles and may also be responsible for determining the conformation of the 16S rRNA at the A site. This chain is Small ribosomal subunit protein uS14, found in Saccharophagus degradans (strain 2-40 / ATCC 43961 / DSM 17024).